Reading from the N-terminus, the 329-residue chain is Alpha-tubulin N-acetyltransferase 1 (329 aa).

The 181-residue stretch at Ser-5–Phe-185 folds into the N-acetyltransferase domain. Residues Phe-119–Lys-132 and Ser-155–Lys-164 each bind acetyl-CoA. Disordered stretches follow at residues Pro-218–Lys-261 and Gly-306–His-329. Over residues Tyr-220–Asn-229 the composition is skewed to polar residues. The segment covering Thr-238–Val-249 has biased composition (pro residues). The span at Pro-313–His-329 shows a compositional bias: polar residues.

It belongs to the acetyltransferase ATAT1 family.

It carries out the reaction L-lysyl-[alpha-tubulin] + acetyl-CoA = N(6)-acetyl-L-lysyl-[alpha-tubulin] + CoA + H(+). Specifically acetylates 'Lys-40' in alpha-tubulin on the lumenal side of microtubules. Promotes microtubule destabilization and accelerates microtubule dynamics; this activity may be independent of acetylation activity. Acetylates alpha-tubulin with a slow enzymatic rate, due to a catalytic site that is not optimized for acetyl transfer. Enters the microtubule through each end and diffuses quickly throughout the lumen of microtubules. Acetylates only long/old microtubules because of its slow acetylation rate since it does not have time to act on dynamically unstable microtubules before the enzyme is released. The polypeptide is Alpha-tubulin N-acetyltransferase 1 (Trypanosoma cruzi (strain CL Brener)).